Reading from the N-terminus, the 382-residue chain is Chaperone protein DnaJ (382 aa).

Residues D6–G70 form the J domain. The CR-type zinc finger occupies G131–K213. Zn(2+)-binding residues include C144, C147, C161, C164, C187, C190, C201, and C204. CXXCXGXG motif repeat units follow at residues C144–G151, C161–G168, C187–G194, and C201–G208. The tract at residues T146–G168 is disordered. The interval F348–S382 is disordered. Residues G371 to S382 are compositionally biased toward basic and acidic residues.

Belongs to the DnaJ family. As to quaternary structure, homodimer. Zn(2+) is required as a cofactor.

The protein localises to the cytoplasm. Participates actively in the response to hyperosmotic and heat shock by preventing the aggregation of stress-denatured proteins and by disaggregating proteins, also in an autonomous, DnaK-independent fashion. Unfolded proteins bind initially to DnaJ; upon interaction with the DnaJ-bound protein, DnaK hydrolyzes its bound ATP, resulting in the formation of a stable complex. GrpE releases ADP from DnaK; ATP binding to DnaK triggers the release of the substrate protein, thus completing the reaction cycle. Several rounds of ATP-dependent interactions between DnaJ, DnaK and GrpE are required for fully efficient folding. Also involved, together with DnaK and GrpE, in the DNA replication of plasmids through activation of initiation proteins. This chain is Chaperone protein DnaJ, found in Methanosarcina acetivorans (strain ATCC 35395 / DSM 2834 / JCM 12185 / C2A).